We begin with the raw amino-acid sequence, 179 residues long: Large ribosomal subunit protein uL5 (179 aa).

Belongs to the universal ribosomal protein uL5 family. Part of the 50S ribosomal subunit; part of the 5S rRNA/L5/L18/L25 subcomplex. Contacts the 5S rRNA and the P site tRNA. Forms a bridge to the 30S subunit in the 70S ribosome.

This is one of the proteins that bind and probably mediate the attachment of the 5S RNA into the large ribosomal subunit, where it forms part of the central protuberance. In the 70S ribosome it contacts protein S13 of the 30S subunit (bridge B1b), connecting the 2 subunits; this bridge is implicated in subunit movement. Contacts the P site tRNA; the 5S rRNA and some of its associated proteins might help stabilize positioning of ribosome-bound tRNAs. This Exiguobacterium sp. (strain ATCC BAA-1283 / AT1b) protein is Large ribosomal subunit protein uL5.